The following is a 451-amino-acid chain: Tubulin alpha-3 chain (451 aa).

Residue Gln11 participates in GTP binding. The residue at position 40 (Lys40) is an N6-acetyllysine. 7 residues coordinate GTP: Glu71, Ser140, Gly144, Thr145, Thr179, Asn206, and Asn228. Glu71 provides a ligand contact to Mg(2+). Residue Glu254 is part of the active site.

This sequence belongs to the tubulin family. In terms of assembly, dimer of alpha and beta chains. A typical microtubule is a hollow water-filled tube with an outer diameter of 25 nm and an inner diameter of 15 nM. Alpha-beta heterodimers associate head-to-tail to form protofilaments running lengthwise along the microtubule wall with the beta-tubulin subunit facing the microtubule plus end conferring a structural polarity. Microtubules usually have 13 protofilaments but different protofilament numbers can be found in some organisms and specialized cells. It depends on Mg(2+) as a cofactor. Undergoes a tyrosination/detyrosination cycle, the cyclic removal and re-addition of a C-terminal tyrosine residue by the enzymes tubulin tyrosine carboxypeptidase (TTCP) and tubulin tyrosine ligase (TTL), respectively. Post-translationally, acetylation of alpha chains at Lys-40 stabilizes microtubules and affects affinity and processivity of microtubule motors. This modification has a role in multiple cellular functions, ranging from cell motility, cell cycle progression or cell differentiation to intracellular trafficking and signaling.

Its subcellular location is the cytoplasm. The protein resides in the cytoskeleton. The enzyme catalyses GTP + H2O = GDP + phosphate + H(+). In terms of biological role, tubulin is the major constituent of microtubules, a cylinder consisting of laterally associated linear protofilaments composed of alpha- and beta-tubulin heterodimers. Microtubules grow by the addition of GTP-tubulin dimers to the microtubule end, where a stabilizing cap forms. Below the cap, tubulin dimers are in GDP-bound state, owing to GTPase activity of alpha-tubulin. The polypeptide is Tubulin alpha-3 chain (Homarus americanus (American lobster)).